Consider the following 87-residue polypeptide: Small ribosomal subunit protein bS20 (87 aa).

The segment covering 1–15 has biased composition (basic residues); it reads MANHKSAMKRIKQTA. A disordered region spans residues 1–27; sequence MANHKSAMKRIKQTAKRTERNKHERST. A compositionally biased stretch (basic and acidic residues) spans 16–27; that stretch reads KRTERNKHERST.

The protein belongs to the bacterial ribosomal protein bS20 family.

Its function is as follows. Binds directly to 16S ribosomal RNA. The polypeptide is Small ribosomal subunit protein bS20 (Citrifermentans bemidjiense (strain ATCC BAA-1014 / DSM 16622 / JCM 12645 / Bem) (Geobacter bemidjiensis)).